The primary structure comprises 678 residues: NADPH--cytochrome P450 reductase (678 aa).

The residue at position 2 (Gly-2) is an N-acetylglycine. Over 2-21 (GDSHVDTGATSTEAVAEEVS) the chain is Lumenal. Residues 22–42 (LFSMTDMILLSVLVGFLTYFF) form a helical membrane-spanning segment. Residues 43–678 (LFRKKKEEIP…KGRYSLDVWS (636 aa)) lie on the Cytoplasmic side of the membrane. Ser-63 carries the phosphoserine modification. One can recognise a Flavodoxin-like domain in the interval 80-224 (IIVFYGSQTG…DFITWREQFW (145 aa)). FMN is bound by residues 86–91 (SQTGTA), 138–141 (ATYG), 173–182 (LGNKTYEHFN), and Asp-208. One can recognise an FAD-binding FR-type domain in the interval 279 to 521 (KNPFLAAVTT…FVRKSQFRLP (243 aa)). NADP(+) is bound at residue Arg-298. Residues Arg-424, 454 to 457 (RYYS), 472 to 474 (CAV), Tyr-478, and 488 to 491 (GVAT) contribute to the FAD site. NADP(+) is bound by residues Thr-535, 596–597 (SR), 602–606 (KVYVQ), and Asp-639. Residue Trp-677 participates in FAD binding.

It belongs to the NADPH--cytochrome P450 reductase family. In the N-terminal section; belongs to the flavodoxin family. This sequence in the C-terminal section; belongs to the flavoprotein pyridine nucleotide cytochrome reductase family. FAD serves as cofactor. FMN is required as a cofactor.

The protein localises to the endoplasmic reticulum membrane. It catalyses the reaction 2 oxidized [cytochrome P450] + NADPH = 2 reduced [cytochrome P450] + NADP(+) + H(+). In terms of biological role, this enzyme is required for electron transfer from NADP to cytochrome P450 in microsomes. It can also provide electron transfer to heme oxygenase and cytochrome B5. This is NADPH--cytochrome P450 reductase from Cavia porcellus (Guinea pig).